A 367-amino-acid chain; its full sequence is NADH-quinone oxidoreductase subunit H (367 aa).

8 helical membrane passes run 19–39 (ALFIKIIAVIISVMISVAYLV), 87–107 (ICFLIAPIITFTLALLGWAVI), 132–152 (IGVLYILAISSLGVYGIIIAG), 178–198 (IGLTIVTVLLATGSLKLGEIV), 204–224 (MPYWIDLLLLPMACIFFISAL), 266–286 (ILINAMAVIFFFGGWYPPLNI), 291–311 (IIPGIVWFVLKVVALLFCFIW), and 328–348 (GWKVFLPISLLWVVLVSSILV).

It belongs to the complex I subunit 1 family. In terms of assembly, NDH-1 is composed of 14 different subunits. Subunits NuoA, H, J, K, L, M, N constitute the membrane sector of the complex.

It localises to the cell inner membrane. The catalysed reaction is a quinone + NADH + 5 H(+)(in) = a quinol + NAD(+) + 4 H(+)(out). NDH-1 shuttles electrons from NADH, via FMN and iron-sulfur (Fe-S) centers, to quinones in the respiratory chain. The immediate electron acceptor for the enzyme in this species is believed to be ubiquinone. Couples the redox reaction to proton translocation (for every two electrons transferred, four hydrogen ions are translocated across the cytoplasmic membrane), and thus conserves the redox energy in a proton gradient. This subunit may bind ubiquinone. The polypeptide is NADH-quinone oxidoreductase subunit H (Ehrlichia chaffeensis (strain ATCC CRL-10679 / Arkansas)).